Consider the following 1083-residue polypeptide: Kinesin-like protein KIN-14R (1083 aa).

The stretch at 264–418 (HDKYEKKIAE…NHIQETKGNI (155 aa)) forms a coiled coil. The region spanning 417-739 (NIRVFCRCRP…LNFATRVRGV (323 aa)) is the Kinesin motor domain. Position 500 to 507 (500 to 507 (GQTGTGKT)) interacts with ATP. Coiled-coil stretches lie at residues 746 to 876 (KQVD…SEGS) and 905 to 947 (IKEL…MATT). Residues 967–1083 (EDNFGNENME…RDSKKKIWSR (117 aa)) are disordered. A compositionally biased stretch (polar residues) spans 971–985 (GNENMESNTNILRTS). The segment covering 1020 to 1032 (PQMKEKRIRKSDP) has biased composition (basic and acidic residues). Residues 1044 to 1054 (RTASGSSSQVP) are compositionally biased toward polar residues. Over residues 1062–1083 (KREQQEVPVVKERDSKKKIWSR) the composition is skewed to basic and acidic residues.

Belongs to the TRAFAC class myosin-kinesin ATPase superfamily. Kinesin family. KIN-14 subfamily.

The chain is Kinesin-like protein KIN-14R from Arabidopsis thaliana (Mouse-ear cress).